The primary structure comprises 198 residues: Putative Do-like 15 protein (198 aa).

The serine protease stretch occupies residues 48 to 198; that stretch reads KIFSFSREPN…VFENDSPSDK (151 aa). Residues His86 and Ser175 each act as charge relay system in the active site.

It belongs to the peptidase S1B family.

This chain is Putative Do-like 15 protein (DEGP15), found in Arabidopsis thaliana (Mouse-ear cress).